Consider the following 197-residue polypeptide: Lymphotoxin-alpha (197 aa).

The first 26 residues, 1–26 (MTPPGRLYLPLLLGLLLAPPPPGAQG), serve as a signal peptide directing secretion. The THD domain occupies 55-197 (PAAHLVGDPS…SSVFFGAFAL (143 aa)). Residue Asn88 is glycosylated (N-linked (GlcNAc...) asparagine). Cysteines 112 and 148 form a disulfide.

This sequence belongs to the tumor necrosis factor family. Homotrimer, and heterotrimer of either two LTB and one LTA subunits or (less prevalent) two LTA and one LTB subunits. Interacts with TNFRSF14.

Its subcellular location is the secreted. It is found in the membrane. In terms of biological role, cytokine that in its homotrimeric form binds to TNFRSF1A/TNFR1, TNFRSF1B/TNFBR and TNFRSF14/HVEM. In its heterotrimeric form with LTB binds to TNFRSF3/LTBR. Lymphotoxin is produced by lymphocytes and is cytotoxic for a wide range of tumor cells in vitro and in vivo. The sequence is that of Lymphotoxin-alpha (LTA) from Oryctolagus cuniculus (Rabbit).